Reading from the N-terminus, the 499-residue chain is Cytochrome P450 monooxygenase ausI (499 aa).

Residues 10 to 30 (PLGQPLIAGFVVVSAVLYLLY) traverse the membrane as a helical segment. Cys-439 provides a ligand contact to heme. Asn-483 carries an N-linked (GlcNAc...) asparagine glycan.

Belongs to the cytochrome P450 family. Requires heme as cofactor.

The protein resides in the membrane. It participates in secondary metabolite biosynthesis; terpenoid biosynthesis. Its function is as follows. Cytochrome P450 monooxygenase; part of the gene cluster B that mediates the biosynthesis of austinol and dehydroaustinol, two fungal meroterpenoids. The first step of the pathway is the synthesis of 3,5-dimethylorsellinic acid by the polyketide synthase ausA. 3,5-dimethylorsellinic acid is then prenylated by the polyprenyl transferase ausN. Further epoxidation by the FAD-dependent monooxygenase ausM and cyclization by the probable terpene cyclase ausL lead to the formation of protoaustinoid A. Protoaustinoid A is then oxidized to spiro-lactone preaustinoid A3 by the combined action of the FAD-binding monooxygenases ausB and ausC, and the dioxygenase ausE. Acid-catalyzed keto-rearrangement and ring contraction of the tetraketide portion of preaustinoid A3 by ausJ lead to the formation of preaustinoid A4. The aldo-keto reductase ausK, with the help of ausH, is involved in the next step by transforming preaustinoid A4 into isoaustinone which is in turn hydroxylated by the P450 monooxygenase ausI to form austinolide. Finally, the cytochrome P450 monooxygenase ausG modifies austinolide to austinol. Austinol can be further modified to dehydroaustinol which forms a diffusible complex with diorcinol that initiates conidiation. Due to genetic rearrangements of the clusters and the subsequent loss of some enzymes, the end products of the Emericella nidulans austinoid biosynthesis clusters are austinol and dehydroaustinol, even if additional enzymes, such as the O-acetyltransferase ausQ and the cytochrome P450 monooxygenase ausR are still functional. The sequence is that of Cytochrome P450 monooxygenase ausI from Emericella nidulans (strain FGSC A4 / ATCC 38163 / CBS 112.46 / NRRL 194 / M139) (Aspergillus nidulans).